The following is a 269-amino-acid chain: MRYTILSKGDSKSNALKHKMINHMKDFHMVEDAVNPEIVISVGGDGTLLQAFHQYSHMLSQVAFVGVHTGHLGFYADWLPHEVEKLIIEINNSEFQVIEYPLLEIIVRYNDNGYETRYLALNEATMKTENGSTLVVDVGIRGKQFERFRGDGLCISTPSGSTAYNKALGGALIHPSLEAMQIAEIASINNRVFRTVGSPLVLPKHHTCLITPVNHDTILTTIDHVSLKHKNVNGIQFRVANEKVRFARFRPFPFWKRVHDSFIESEDGR.

Aspartate 45 serves as the catalytic Proton acceptor. Residues 45–46 (DG), 122–123 (NE), arginine 149, aspartate 151, and alanine 186 each bind NAD(+).

Belongs to the NAD kinase family. The cofactor is a divalent metal cation.

The protein localises to the cytoplasm. The enzyme catalyses NAD(+) + ATP = ADP + NADP(+) + H(+). Functionally, involved in the regulation of the intracellular balance of NAD and NADP, and is a key enzyme in the biosynthesis of NADP. Catalyzes specifically the phosphorylation on 2'-hydroxyl of the adenosine moiety of NAD to yield NADP. This chain is NAD kinase, found in Staphylococcus haemolyticus (strain JCSC1435).